The chain runs to 483 residues: GTPase Der (483 aa).

2 EngA-type G domains span residues 3–167 and 212–387; these read FTLA…GEER and LRIA…EIWN. Residues 9-16, 56-60, 119-122, 218-225, 265-269, and 330-333 contribute to the GTP site; these read GRPNVGKS, DTAGL, NKAE, GRPNAGKS, DTAGM, and NKWD. Residues 388 to 472 enclose the KH-like domain; it reads RRISTGRLNR…PIRLSLRTSD (85 aa).

This sequence belongs to the TRAFAC class TrmE-Era-EngA-EngB-Septin-like GTPase superfamily. EngA (Der) GTPase family. In terms of assembly, associates with the 50S ribosomal subunit.

GTPase that plays an essential role in the late steps of ribosome biogenesis. In Brucella suis (strain ATCC 23445 / NCTC 10510), this protein is GTPase Der.